The chain runs to 70 residues: Protein SlyX homolog (70 aa).

This sequence belongs to the SlyX family.

This chain is Protein SlyX homolog, found in Rhizobium meliloti (strain 1021) (Ensifer meliloti).